The chain runs to 229 residues: Potassium/proton antiporter CemA (229 aa).

The next 3 helical transmembrane spans lie at 6 to 26 (AFIP…ISLS), 114 to 134 (ILCF…LLII), and 189 to 209 (IISG…KYWI).

It belongs to the CemA family.

The protein localises to the plastid. It is found in the chloroplast inner membrane. The enzyme catalyses K(+)(in) + H(+)(out) = K(+)(out) + H(+)(in). Functionally, contributes to K(+)/H(+) antiport activity by supporting proton efflux to control proton extrusion and homeostasis in chloroplasts in a light-dependent manner to modulate photosynthesis. Prevents excessive induction of non-photochemical quenching (NPQ) under continuous-light conditions. Indirectly promotes efficient inorganic carbon uptake into chloroplasts. This chain is Potassium/proton antiporter CemA, found in Carica papaya (Papaya).